A 221-amino-acid chain; its full sequence is uncharacterized protein (221 aa).

The interval 40 to 162 is disordered; that stretch reads TIEVEPSPVQ…EPPEKVELSP (123 aa). The segment covering 47 to 60 has biased composition (polar residues); the sequence is PVQQDNPPISSEQA. Positions 82-92 are enriched in low complexity; it reads SSAQQEATAQT.

This is an uncharacterized protein from Homo sapiens (Human).